A 710-amino-acid chain; its full sequence is WD repeat-containing protein CG11141 (710 aa).

WD repeat units follow at residues 31–70 and 133–172; these read FFPA…MQKL and LHKC…HLSK. Residues 283–307 are disordered; it reads LNPKQRSEPSGTHHTSASTSSTRHS. Residues 292-307 are compositionally biased toward low complexity; it reads SGTHHTSASTSSTRHS. A Phosphothreonine modification is found at T488. A Phosphoserine modification is found at S553. Disordered regions lie at residues 612-635 and 685-710; these read ASIQ…GEPV and DPLA…FLDN. Composition is skewed to polar residues over residues 613-624 and 694-704; these read SIQTSSRENATN and PATSDSNTSSE.

This sequence belongs to the WD repeat KIAA0329 family.

The chain is WD repeat-containing protein CG11141 from Drosophila melanogaster (Fruit fly).